A 122-amino-acid chain; its full sequence is Urease subunit beta (122 aa).

Positions 102–122 are disordered; sequence DGGTAVAGEPRPGIAAERDHQ.

This sequence belongs to the urease beta subunit family. In terms of assembly, heterotrimer of UreA (gamma), UreB (beta) and UreC (alpha) subunits. Three heterotrimers associate to form the active enzyme.

It is found in the cytoplasm. It carries out the reaction urea + 2 H2O + H(+) = hydrogencarbonate + 2 NH4(+). Its pathway is nitrogen metabolism; urea degradation; CO(2) and NH(3) from urea (urease route): step 1/1. This chain is Urease subunit beta, found in Paenarthrobacter aurescens (strain TC1).